Here is a 287-residue protein sequence, read N- to C-terminus: Anthocyanidin 3-O-glucosyltransferase 7 (287 aa).

UDP-alpha-D-glucose contacts are provided by Ala162, Gln164, His179, Trp182, Asn183, Ser184, and Glu187. Gly202 lines the an anthocyanidin pocket. UDP-alpha-D-glucose is bound by residues Asp203 and Gln204.

It belongs to the UDP-glycosyltransferase family. As to expression, expressed in cotyledons, hypocotyls, roots and leaves.

The enzyme catalyses an anthocyanidin + UDP-alpha-D-glucose + H(+) = an anthocyanidin 3-O-beta-D-glucoside + UDP. It functions in the pathway pigment biosynthesis; anthocyanin biosynthesis. Its function is as follows. In the presence of other necessary color factors, this glycosylation reaction allows the accumulation of anthocyanin pigments. This Manihot esculenta (Cassava) protein is Anthocyanidin 3-O-glucosyltransferase 7 (GT7).